A 48-amino-acid polypeptide reads, in one-letter code: Large ribosomal subunit protein bL33A (48 aa).

This sequence belongs to the bacterial ribosomal protein bL33 family.

The sequence is that of Large ribosomal subunit protein bL33A from Bacillus anthracis.